We begin with the raw amino-acid sequence, 222 residues long: 25 kDa elongation factor 1-beta (222 aa).

Over residues 75–94 the composition is skewed to low complexity; sequence TSASAPAKQAPKKAASAPAK. Residues 75–98 form a disordered region; it reads TSASAPAKQAPKKAASAPAKQADE.

This sequence belongs to the EF-1-beta/EF-1-delta family. EF-1 is composed of 4 subunits: alpha, beta, delta, and gamma.

Functionally, EF-1-beta and EF-1-delta stimulate the exchange of GDP bound to EF-1-alpha to GTP. In Trypanosoma cruzi, this protein is 25 kDa elongation factor 1-beta.